A 133-amino-acid polypeptide reads, in one-letter code: Small ribosomal subunit protein uS9 (133 aa).

Residues 95–113 are compositionally biased toward basic and acidic residues; it reads GDSKQELKSRGFLTRDPRK. Residues 95-133 form a disordered region; sequence GDSKQELKSRGFLTRDPRKKERKKYGHKKARKSFQFSKR. Over residues 114–133 the composition is skewed to basic residues; it reads KERKKYGHKKARKSFQFSKR.

The protein belongs to the universal ribosomal protein uS9 family.

The protein is Small ribosomal subunit protein uS9 of Chlamydia felis (strain Fe/C-56) (Chlamydophila felis).